Here is a 155-residue protein sequence, read N- to C-terminus: Small ribosomal subunit protein uS7cz/uS7cy (155 aa).

Component of the chloroplast small ribosomal subunit (SSU). Mature 70S chloroplast ribosomes of higher plants consist of a small (30S) and a large (50S) subunit. The 30S small subunit contains 1 molecule of ribosomal RNA (16S rRNA) and 24 different proteins. The 50S large subunit contains 3 rRNA molecules (23S, 5S and 4.5S rRNA) and 33 different proteins.

The protein resides in the plastid. Its subcellular location is the chloroplast. In terms of biological role, component of the chloroplast ribosome (chloro-ribosome), a dedicated translation machinery responsible for the synthesis of chloroplast genome-encoded proteins, including proteins of the transcription and translation machinery and components of the photosynthetic apparatus. This chain is Small ribosomal subunit protein uS7cz/uS7cy (rps7-A), found in Spinacia oleracea (Spinach).